A 102-amino-acid polypeptide reads, in one-letter code: uncharacterized protein (102 aa).

Residues isoleucine 5 to phenylalanine 27 traverse the membrane as a helical segment.

The protein resides in the host membrane. This is an uncharacterized protein from Microplitis demolitor (Parasitoid wasp).